Reading from the N-terminus, the 553-residue chain is Glucose-6-phosphate isomerase (553 aa).

The Proton donor role is filled by E355. Catalysis depends on residues H386 and K513.

This sequence belongs to the GPI family.

Its subcellular location is the cytoplasm. It catalyses the reaction alpha-D-glucose 6-phosphate = beta-D-fructose 6-phosphate. It participates in carbohydrate biosynthesis; gluconeogenesis. Its pathway is carbohydrate degradation; glycolysis; D-glyceraldehyde 3-phosphate and glycerone phosphate from D-glucose: step 2/4. Functionally, catalyzes the reversible isomerization of glucose-6-phosphate to fructose-6-phosphate. In Baumannia cicadellinicola subsp. Homalodisca coagulata, this protein is Glucose-6-phosphate isomerase.